We begin with the raw amino-acid sequence, 184 residues long: ATP synthase subunit b, chloroplastic (184 aa).

Residues leucine 27–leucine 49 traverse the membrane as a helical segment.

It belongs to the ATPase B chain family. As to quaternary structure, F-type ATPases have 2 components, F(1) - the catalytic core - and F(0) - the membrane proton channel. F(1) has five subunits: alpha(3), beta(3), gamma(1), delta(1), epsilon(1). F(0) has four main subunits: a(1), b(1), b'(1) and c(10-14). The alpha and beta chains form an alternating ring which encloses part of the gamma chain. F(1) is attached to F(0) by a central stalk formed by the gamma and epsilon chains, while a peripheral stalk is formed by the delta, b and b' chains.

Its subcellular location is the plastid. It localises to the chloroplast thylakoid membrane. F(1)F(0) ATP synthase produces ATP from ADP in the presence of a proton or sodium gradient. F-type ATPases consist of two structural domains, F(1) containing the extramembraneous catalytic core and F(0) containing the membrane proton channel, linked together by a central stalk and a peripheral stalk. During catalysis, ATP synthesis in the catalytic domain of F(1) is coupled via a rotary mechanism of the central stalk subunits to proton translocation. Functionally, component of the F(0) channel, it forms part of the peripheral stalk, linking F(1) to F(0). In Ceratophyllum demersum (Rigid hornwort), this protein is ATP synthase subunit b, chloroplastic.